A 529-amino-acid chain; its full sequence is Bifunctional purine biosynthesis protein PurH (529 aa).

One can recognise an MGS-like domain in the interval 1-148 (MTNRNVIKNV…KNYKNVLVVT (148 aa)).

Belongs to the PurH family.

It carries out the reaction (6R)-10-formyltetrahydrofolate + 5-amino-1-(5-phospho-beta-D-ribosyl)imidazole-4-carboxamide = 5-formamido-1-(5-phospho-D-ribosyl)imidazole-4-carboxamide + (6S)-5,6,7,8-tetrahydrofolate. The enzyme catalyses IMP + H2O = 5-formamido-1-(5-phospho-D-ribosyl)imidazole-4-carboxamide. Its pathway is purine metabolism; IMP biosynthesis via de novo pathway; 5-formamido-1-(5-phospho-D-ribosyl)imidazole-4-carboxamide from 5-amino-1-(5-phospho-D-ribosyl)imidazole-4-carboxamide (10-formyl THF route): step 1/1. The protein operates within purine metabolism; IMP biosynthesis via de novo pathway; IMP from 5-formamido-1-(5-phospho-D-ribosyl)imidazole-4-carboxamide: step 1/1. This Buchnera aphidicola subsp. Baizongia pistaciae (strain Bp) protein is Bifunctional purine biosynthesis protein PurH.